We begin with the raw amino-acid sequence, 1080 residues long: Ubiquitin carboxyl-terminal hydrolase 8 (1080 aa).

One can recognise an MIT domain in the interval 33 to 116 (TKNYIHSAQK…ESLKLRYEEA (84 aa)). Basic and acidic residues predominate over residues 119 to 173 (RKQLEEKDRREEEQLQQQKRQEMGREDSGAAAKRSVENLLDSKTKTQRINGEKSE). A disordered region spans residues 119 to 176 (RKQLEEKDRREEEQLQQQKRQEMGREDSGAAAKRSVENLLDSKTKTQRINGEKSEGAA). At S160 the chain carries Phosphoserine. One can recognise a Rhodanese domain in the interval 195–313 (KNTSLIIMDA…WLLCYPQFTT (119 aa)). Low complexity predominate over residues 379 to 393 (ALAGPGAAPRAEASP). 3 disordered regions span residues 379 to 455 (ALAG…TDEE), 468 to 605 (EKNK…RSEE), and 642 to 710 (PPEM…KPPC). The residue at position 392 (S392) is a Phosphoserine. Residues 405–413 (PQVDRTKKP) carry the SH3-binding motif. A compositionally biased stretch (basic and acidic residues) spans 417–427 (LPEDHRIKSEN). S446 carries the phosphoserine modification. Basic and acidic residues-rich tracts occupy residues 468-535 (EKNK…RELS), 549-577 (SKSE…KRPA), and 593-605 (AQRE…RSEE). At T569 the chain carries Phosphothreonine. A compositionally biased stretch (polar residues) spans 678–688 (SYSSPDITQAL). S680 and S681 each carry phosphoserine. The USP domain occupies 739 to 1071 (TGLRNLGNTC…AAYILFYTSL (333 aa)). C748 acts as the Nucleophile in catalysis. T907 carries the post-translational modification Phosphothreonine. H1029 (proton acceptor) is an active-site residue.

The protein belongs to the peptidase C19 family. Forms a ternary complex with RNF128 and OTUB1. Interacts (via C-terminal UCH catalytic domain) with OTUB1 isoform 1. Interacts with STAM2 (via SH3 domain). Interacts with DNAJB3, EGFR, EPS15, RASGRF1, RNF41, YWHAE, YWHAG and YWHAZ. Interacts with NBR1, RASGRF1, RNF41 and IST1. Associates with the ESCRT-0 complex and with microtubules. Interacts with BIRC6/bruce and KIF23/MKLP1. Post-translationally, phosphorylation of Ser-680 is essential for interaction with YWHAE and for cytosol localization. Undergoes dephosphorylation at Ser-680 in the M phase. Tyrosine-phosphorylated in its N-terminal half in an EGFR-dependent manner. In terms of processing, ubiquitinated. Inactive form is mostly monoubiquitinated, but polyubiquitination happens too. Ubiquitination is increased in EGF-stimulated cells. Ubiquitination of active form is undetectable, suggesting a possibility that USP8 deubiquitinates itself, thereby regulating its own function. Highly expressed in testis. Expressed at intermediate level in brain.

It is found in the cytoplasm. It localises to the nucleus. The protein resides in the endosome membrane. The protein localises to the cell membrane. It catalyses the reaction Thiol-dependent hydrolysis of ester, thioester, amide, peptide and isopeptide bonds formed by the C-terminal Gly of ubiquitin (a 76-residue protein attached to proteins as an intracellular targeting signal).. Hydrolase that can remove conjugated ubiquitin from proteins and therefore plays an important regulatory role at the level of protein turnover by preventing degradation. Converts both 'Lys-48' an 'Lys-63'-linked ubiquitin chains. Catalytic activity is enhanced in the M phase. Involved in cell proliferation. Required to enter into S phase in response to serum stimulation. May regulate T-cell anergy mediated by RNF128 via the formation of a complex containing RNF128 and OTUB1. Probably regulates the stability of STAM2 and RASGRF1. Regulates endosomal ubiquitin dynamics, cargo sorting, membrane traffic at early endosomes, and maintenance of ESCRT-0 stability. The level of protein ubiquitination on endosomes is essential for maintaining the morphology of the organelle. Deubiquitinates EPS15 and controls tyrosine kinase stability. Removes conjugated ubiquitin from EGFR thus regulating EGFR degradation and downstream MAPK signaling. Involved in acrosome biogenesis through interaction with the spermatid ESCRT-0 complex and microtubules. Deubiquitinates BIRC6/bruce and KIF23/MKLP1. Deubiquitinates BACE1 which inhibits BACE1 lysosomal degradation and modulates BACE-mediated APP cleavage and amyloid-beta formation. In Mus musculus (Mouse), this protein is Ubiquitin carboxyl-terminal hydrolase 8.